Reading from the N-terminus, the 290-residue chain is tRNA dimethylallyltransferase (290 aa).

Position 9–16 (9–16) interacts with ATP; it reads GPTASGKT. Residue 11-16 participates in substrate binding; that stretch reads TASGKT. Residues 34–37 form an interaction with substrate tRNA region; the sequence is DSTQ.

Belongs to the IPP transferase family. In terms of assembly, monomer. Mg(2+) serves as cofactor.

The catalysed reaction is adenosine(37) in tRNA + dimethylallyl diphosphate = N(6)-dimethylallyladenosine(37) in tRNA + diphosphate. In terms of biological role, catalyzes the transfer of a dimethylallyl group onto the adenine at position 37 in tRNAs that read codons beginning with uridine, leading to the formation of N6-(dimethylallyl)adenosine (i(6)A). This Phytoplasma australiense protein is tRNA dimethylallyltransferase.